The following is a 668-amino-acid chain: Ecdysone oxidase (668 aa).

FAD contacts are provided by residues N137–V140, V270, and W536–H537. The Proton acceptor role is filled by H537.

The protein belongs to the GMC oxidoreductase family. FAD is required as a cofactor.

The enzyme catalyses ecdysone + O2 = 3-dehydroecdysone + H2O2. Functionally, involved in the inactivation of ecdysteroid molting hormones by converting ecdysteroids into 3-dehydroecdysteroids. The chain is Ecdysone oxidase from Bombyx mori (Silk moth).